The chain runs to 578 residues: Probable arginine--tRNA ligase, mitochondrial (578 aa).

Residues 1 to 16 (MACGFRRSIACQLSRV) constitute a mitochondrion transit peptide. L-arginine-binding positions include 133–135 (SPN), His144, Tyr322, Asp326, and Gln350. Positions 133 to 144 (SPNIAKKFHVGH) match the 'HIGH' region motif. Residue Lys568 is modified to N6-acetyllysine.

Belongs to the class-I aminoacyl-tRNA synthetase family.

It is found in the mitochondrion membrane. The enzyme catalyses tRNA(Arg) + L-arginine + ATP = L-arginyl-tRNA(Arg) + AMP + diphosphate. Its function is as follows. Catalyzes the attachment of arginine to tRNA(Arg) in a two-step reaction: arginine is first activated by ATP to form Arg-AMP and then transferred to the acceptor end of tRNA(Arg). In Mus musculus (Mouse), this protein is Probable arginine--tRNA ligase, mitochondrial (Rars2).